The chain runs to 2543 residues: Highly reducing polyketide synthase PKS2 (2543 aa).

In terms of domain architecture, Ketosynthase family 3 (KS3) spans 4–425 (EPRIAVIGLS…GSNSAILLEG (422 aa)). Catalysis depends on for beta-ketoacyl synthase activity residues C174, H309, and H349. Residues 573–902 (VFTGQGAQHA…TYLPTLFRGT (330 aa)) are malonyl-CoA:ACP transacylase (MAT) domain. S662 (for malonyltransferase activity) is an active-site residue. The tract at residues 969–1101 (HPLLGRKISP…GQIEAEMTDM (133 aa)) is N-terminal hotdog fold. The region spanning 969-1281 (HPLLGRKISP…FRNIGSAEEV (313 aa)) is the PKS/mFAS DH domain. Positions 969–1283 (HPLLGRKISP…NIGSAEEVID (315 aa)) are dehydratase (DH) domain. H1001 serves as the catalytic Proton acceptor; for dehydratase activity. The C-terminal hotdog fold stretch occupies residues 1119 to 1281 (TGLKEHDINA…FRNIGSAEEV (163 aa)). D1188 (proton donor; for dehydratase activity) is an active-site residue. A methyltransferase (CMet) domain region spans residues 1438–1631 (SKVLGYLTEY…LPSRYGTDKP (194 aa)). An enoylreductase (ER) domain region spans residues 1847–2159 (GSPDTIYFQR…SGEHMGKMVI (313 aa)). Positions 2184–2359 (ATYLVAGGTR…YTVSIALPVV (176 aa)) are ketoreductase (KR) domain. Residues 2463–2540 (DPLIGLTEAM…ALATEILSQR (78 aa)) form the Carrier domain. S2500 bears the O-(pantetheine 4'-phosphoryl)serine mark.

Its pathway is secondary metabolite biosynthesis. In terms of biological role, highly reducing polyketide synthase; part of the gene cluster that mediates the biosynthesis of phomenoic acid, a long chain aliphatic carboxylic acid that does not appear to be essential for pathogenicity but may play a role in allowing to outcompete other fungi in the environmental niche via its antifungal properties. The polyketide synthase produces the long methylated aliphatic carboxylic acid chain of phomenoic acid. The cluster-specific cytochrome P450 monooxygenase may then hydroxylate the methyl group of carbon 31. The putative dehydrogenase YogA, which has no obvious role in phomenoic acid biosynthesis, may further modify phomenoic acid to produce a compound not identified yet. The chain is Highly reducing polyketide synthase PKS2 from Leptosphaeria maculans (strain JN3 / isolate v23.1.3 / race Av1-4-5-6-7-8) (Blackleg fungus).